Consider the following 186-residue polypeptide: Peptidyl-tRNA hydrolase (186 aa).

Position 14 (Tyr14) interacts with tRNA. His19 (proton acceptor) is an active-site residue. Tyr61, Asn63, and Asn107 together coordinate tRNA.

Belongs to the PTH family. Monomer.

The protein resides in the cytoplasm. The enzyme catalyses an N-acyl-L-alpha-aminoacyl-tRNA + H2O = an N-acyl-L-amino acid + a tRNA + H(+). Its function is as follows. Hydrolyzes ribosome-free peptidyl-tRNAs (with 1 or more amino acids incorporated), which drop off the ribosome during protein synthesis, or as a result of ribosome stalling. Functionally, catalyzes the release of premature peptidyl moieties from peptidyl-tRNA molecules trapped in stalled 50S ribosomal subunits, and thus maintains levels of free tRNAs and 50S ribosomes. In Helicobacter acinonychis (strain Sheeba), this protein is Peptidyl-tRNA hydrolase.